The sequence spans 377 residues: Formate dehydrogenase, mitochondrial (377 aa).

Residues 1-29 (MAAMWRAAARQLVDRAVGSRAAHTSAGSK) constitute a mitochondrion transit peptide. The substrate site is built by Ile121 and Asn145. Residues Thr146, Asp220, 255–259 (PLTEK), Asn281, Asp307, and 331–334 (HISG) contribute to the NAD(+) site.

The protein belongs to the D-isomer specific 2-hydroxyacid dehydrogenase family. FDH subfamily. As to quaternary structure, homodimer.

The protein localises to the mitochondrion. It carries out the reaction formate + NAD(+) = CO2 + NADH. Catalyzes the NAD(+)-dependent oxidation of formate to carbon dioxide. Involved in the cell stress response. This is Formate dehydrogenase, mitochondrial from Hordeum vulgare (Barley).